The primary structure comprises 112 residues: Protein Churchill (112 aa).

Residues Cys-2, Cys-5, Cys-30, Cys-33, His-59, Cys-61, Cys-64, His-66, His-71, Cys-88, and Cys-91 each coordinate Zn(2+).

The protein belongs to the Churchill family.

In terms of biological role, transcriptional activator that mediates FGF signaling during neural development. Plays a role in the regulation of cell movement. Does not bind DNA by itself. The protein is Protein Churchill (CHURC1) of Homo sapiens (Human).